The chain runs to 418 residues: Ceramide synthase LAC1 (418 aa).

Positions 1–14 (MSTIKPSPSNNNLK) are enriched in polar residues. Residues 1–25 (MSTIKPSPSNNNLKVRSRPRRKSSI) form a disordered region. Residue Ser2 is modified to N-acetylserine. Over 2–81 (STIKPSPSNN…WFSFREISYR (80 aa)) the chain is Cytoplasmic. The span at 15–24 (VRSRPRRKSS) shows a compositional bias: basic residues. Ser23 and Ser24 each carry phosphoserine. Residues 82–102 (HAWIAPLMILIAVYSAYFTSG) form a helical membrane-spanning segment. The N-linked (GlcNAc...) asparagine glycan is linked to Asn103. Residues 103 to 130 (NTTKTNVLHRFVAVSYQIGDTNAYGKGI) lie on the Lumenal side of the membrane. A helical transmembrane segment spans residues 131-155 (NDLCFVFYYMIFFTFLREFLMDVVI). Residues 156-172 (RPFAIRLHVTSKHRIKR) are Cytoplasmic-facing. The region spanning 168 to 385 (HRIKRIMEQM…FRVLYRILWR (218 aa)) is the TLC domain. Fumonisin B1 is bound by residues Arg169, Arg172, and Tyr182. Residues 173–194 (IMEQMYAIFYTGVSGPFGIYCM) form a helical membrane-spanning segment. At 195 to 217 (YHSDLWFFNTKAMYRTYPDFTNP) the chain is on the lumenal side. Residues 218 to 240 (FLFKVFYLGQAAFWAQQACILVL) traverse the membrane as a helical segment. Hexacosanoate-binding residues include Tyr224 and Trp231. Trp231 contacts fumonisin B1. Hexacosanoyl-CoA is bound at residue Trp231. At 241 to 249 (QLEKPRKDH) the chain is on the cytoplasmic side. Residues 250-268 (NELTFHHIVTLLLIWSSYV) traverse the membrane as a helical segment. Fumonisin B1 is bound at residue His255. His255, Thr259, Leu262, Ile263, Ser265, Ser266, Phe269, Phe271, Met274, Gly275, Ile278, Tyr279, Met282, Asp283, and Asp286 together coordinate hexacosanoate. Positions 255, 259, and 262 each coordinate hexacosanoyl-CoA. The hexacosanoyl-CoA site is built by Ser265 and Ser266. Residues 269–273 (FHFTK) lie on the Lumenal side of the membrane. Positions 271, 274, 275, 278, 279, and 282 each coordinate hexacosanoyl-CoA. A helical membrane pass occupies residues 274-295 (MGLPIYITMDVSDFLLSFSKTL). Fumonisin B1 contacts are provided by Asp286, Leu289, Lys293, Asn296, Tyr297, Ala303, Phe304, Phe307, and Trp314. Hexacosanoyl-CoA-binding residues include Asp286, Leu289, Lys293, and Asn296. Topologically, residues 296–305 (NYLDSGLAFF) are cytoplasmic. A helical transmembrane segment spans residues 306-334 (SFAIFVVAWIYLRHYINLKILWSVLTQFR). Phe307 is a hexacosanoyl-CoA binding site. Hexacosanoate is bound by residues Arg318, Phe343, Tyr348, Ile352, Ser353, Ile356, Val357, Leu360, Ile361, and Trp371. Position 318 (Arg318) interacts with hexacosanoyl-CoA. The Lumenal portion of the chain corresponds to 335-353 (TEGNYVLNFATQQYKCWIS). Tyr348, Ile352, Ser353, Ile356, Val357, and Leu360 together coordinate hexacosanoyl-CoA. A helical membrane pass occupies residues 354 to 382 (LPIVFVLIGALQLVNLYWLFLIFRVLYRI). 5 residues coordinate fumonisin B1: Trp371, Ile375, Val378, Ile382, and Arg385. Trp371 contributes to the hexacosanoyl-CoA binding site. Residues 383 to 418 (LWRGILKDDRSDSESDEESDESSTTPTDSTPTKKDI) lie on the Cytoplasmic side of the membrane. The tract at residues 390 to 418 (DDRSDSESDEESDESSTTPTDSTPTKKDI) is disordered.

Belongs to the sphingosine N-acyltransferase family. In terms of assembly, component of the ceramide synthase complex composed of at least LAC1, LAG1 and LIP1. Forms a heterotetrameric complex, where one unit of the LIP1 homodimer interacts with LAC1 and the other with either LAC1 or LAG1. In terms of processing, phosphorylated; phosphorylation is induced upon disruption of sphingolipid synthesis. Phosphorylation is inhibited by exogenous addition of phytosphingosine.

It is found in the endoplasmic reticulum membrane. The enzyme catalyses a very long-chain fatty acyl-CoA + a sphingoid base = an N-(very-long-chain fatty acyl)-sphingoid base + CoA + H(+). It carries out the reaction hexacosanoyl-CoA + sphinganine = N-hexacosanoylsphinganine + CoA + H(+). The catalysed reaction is eicosanoyl-CoA + sphinganine = N-eicosanoylsphinganine + CoA + H(+). It catalyses the reaction a fatty acyl-CoA + sphinganine = an N-acylsphinganine + CoA + H(+). The enzyme catalyses (4R)-hydroxysphinganine + a fatty acyl-CoA = an N-acyl-(4R)-4-hydroxysphinganine + CoA + H(+). Its pathway is lipid metabolism; sphingolipid metabolism. As part of the ceramide synthase complex, inhibited by the sphinganine analog mycotoxin, fumonisin B1 (FB1). Activated by ACB1, as part of the ceramide synthase complex. Its function is as follows. Component of the ceramide synthase complex that catalyzes the transfer of the acyl chain from acyl-CoA to a sphingoid base, with high selectivity toward hexacosanoyl-CoA (C26:0-CoA). N-acylates sphinganine and phytosphingosine bases to form dihydroceramides and phytoceramides, respectively. Redundant with LAG1. Facilitates ER-to-Golgi transport of GPI-anchored proteins. Has a lower affinity for phytosphingosine (PHS) than dihydrosphingosine (DHS); PHS is required for the synthesis of phytoceramides and the formation of nuclear envelopes. Along with LAG1, plays a role in pheromone-induced MAP kinase-activation of mating and formation of diploid cells. May also play a role, together with LAG1, in the polarized membrane distribution of phosphatidylinositol 4,5 biphosphate required for STE5 localization to the plasma membrane. The polypeptide is Ceramide synthase LAC1 (LAC1) (Saccharomyces cerevisiae (strain ATCC 204508 / S288c) (Baker's yeast)).